The sequence spans 111 residues: uncharacterized protein (111 aa).

This is an uncharacterized protein from Enterococcus faecalis (strain ATCC 700802 / V583).